The chain runs to 265 residues: Thymidine kinase 2, mitochondrial (265 aa).

The N-terminal 33 residues, 1–33 (MLLWPLRGWAARALRCFGPGSRGSPASGPGPRR), are a transit peptide targeting the mitochondrion. Positions 20-32 (GSRGSPASGPGPR) are enriched in low complexity. A disordered region spans residues 20 to 47 (GSRGSPASGPGPRRVQRRAWPPDKEQEK). Position 57–65 (57–65 (GNIASGKTT)) interacts with ATP. The Proton acceptor role is filled by glutamate 133.

Belongs to the DCK/DGK family. Monomer. Predominantly expressed in liver, pancreas, muscle, and brain.

It is found in the mitochondrion. The enzyme catalyses thymidine + ATP = dTMP + ADP + H(+). The catalysed reaction is 2'-deoxycytidine + ATP = dCMP + ADP + H(+). It carries out the reaction 2'-deoxyuridine + ATP = dUMP + ADP + H(+). Phosphorylates thymidine, deoxycytidine, and deoxyuridine in the mitochondrial matrix. In non-replicating cells, where cytosolic dNTP synthesis is down-regulated, mtDNA synthesis depends solely on TK2 and DGUOK. Widely used as target of antiviral and chemotherapeutic agents. The protein is Thymidine kinase 2, mitochondrial of Homo sapiens (Human).